We begin with the raw amino-acid sequence, 593 residues long: Glutamate decarboxylase 1 (593 aa).

Low complexity predominate over residues 1 to 12 (MASSTPSPATSS). A disordered region spans residues 1–22 (MASSTPSPATSSNAGADPNTTN). A Phosphoserine modification is found at S77. 189–191 (QLS) is a 4-aminobutanoate binding site. K404 is modified (N6-(pyridoxal phosphate)lysine). R566 lines the 4-aminobutanoate pocket.

The protein belongs to the group II decarboxylase family. As to quaternary structure, homodimer. Pyridoxal 5'-phosphate serves as cofactor.

It catalyses the reaction L-glutamate + H(+) = 4-aminobutanoate + CO2. Its function is as follows. Catalyzes the synthesis of the inhibitory neurotransmitter gamma-aminobutyric acid (GABA) with pyridoxal 5'-phosphate as cofactor. The protein is Glutamate decarboxylase 1 (Gad1) of Mus musculus (Mouse).